A 261-amino-acid chain; its full sequence is Cytosolic Fe-S cluster assembly factor Nubp2 homolog (261 aa).

14–21 contacts ATP; the sequence is GKGGVGKS. [4Fe-4S] cluster is bound by residues Cys-188 and Cys-191.

The protein belongs to the Mrp/NBP35 ATP-binding proteins family. NUBP2/CFD1 subfamily. As to quaternary structure, heterotetramer of 2 Nubp1 and 2 Nubp2 chains. Requires [4Fe-4S] cluster as cofactor.

It localises to the cytoplasm. Its function is as follows. Component of the cytosolic iron-sulfur (Fe/S) protein assembly (CIA) machinery. Required for maturation of extramitochondrial Fe-S proteins. The Nubp1-Nubp2 heterotetramer forms a Fe-S scaffold complex, mediating the de novo assembly of an Fe-S cluster and its transfer to target apoproteins. This Drosophila willistoni (Fruit fly) protein is Cytosolic Fe-S cluster assembly factor Nubp2 homolog.